We begin with the raw amino-acid sequence, 78 residues long: Large ribosomal subunit protein bL28 (78 aa).

Belongs to the bacterial ribosomal protein bL28 family.

The protein is Large ribosomal subunit protein bL28 of Flavobacterium psychrophilum (strain ATCC 49511 / DSM 21280 / CIP 103535 / JIP02/86).